Consider the following 262-residue polypeptide: tRNA pseudouridine synthase A (262 aa).

The active-site Nucleophile is Asp52. Tyr103 provides a ligand contact to substrate.

Belongs to the tRNA pseudouridine synthase TruA family.

It catalyses the reaction uridine(38/39/40) in tRNA = pseudouridine(38/39/40) in tRNA. Functionally, formation of pseudouridine at positions 38, 39 and 40 in the anticodon stem and loop of transfer RNAs. This chain is tRNA pseudouridine synthase A, found in Methanococcus maripaludis (strain C6 / ATCC BAA-1332).